A 130-amino-acid chain; its full sequence is Ribosome-binding factor A (130 aa).

Belongs to the RbfA family. In terms of assembly, monomer. Binds 30S ribosomal subunits, but not 50S ribosomal subunits or 70S ribosomes.

The protein localises to the cytoplasm. In terms of biological role, one of several proteins that assist in the late maturation steps of the functional core of the 30S ribosomal subunit. Associates with free 30S ribosomal subunits (but not with 30S subunits that are part of 70S ribosomes or polysomes). Required for efficient processing of 16S rRNA. May interact with the 5'-terminal helix region of 16S rRNA. This is Ribosome-binding factor A from Flavobacterium johnsoniae (strain ATCC 17061 / DSM 2064 / JCM 8514 / BCRC 14874 / CCUG 350202 / NBRC 14942 / NCIMB 11054 / UW101) (Cytophaga johnsonae).